A 370-amino-acid chain; its full sequence is MATLRLDGIRKRYPNGMTALHSIDLSVADGELIVVVGPSGCGKSTLLRILAGLEPITAGELAINGRRVNELEPAARDIAMVFQNYALYPHMSVAGNMAYALKNRGTPKDEIRRRVANTAALLGLDDLLERRPRQLSGGQRQRVAMGRAIIREPQVFLFDEPLSNLDAKLRVQMRLEIRRLQKRLGITSVYVTHDQVEAMTLADRLVVMNGGHVEQCGTPMALYARPATRFVASFLGSPAMNFLPVTAHAGGVVLPNGAQVALPAILPEGDAATLGIRPEHLVEATASGEAAATLDVTVEMLEPLGADTLAYTRLPGVETWLVVRLDGAHAAREGQRLSLALPVAHCHVFDARGARVPMTGREDAEALAAQ.

Positions 4-235 (LRLDGIRKRY…PATRFVASFL (232 aa)) constitute an ABC transporter domain. ATP is bound at residue 37 to 44 (GPSGCGKS).

The protein belongs to the ABC transporter superfamily. sn-glycerol-3-phosphate importer (TC 3.A.1.1.3) family. As to quaternary structure, the complex is composed of two ATP-binding proteins (UgpC), two transmembrane proteins (UgpA and UgpE) and a solute-binding protein (UgpB).

It is found in the cell inner membrane. The enzyme catalyses sn-glycerol 3-phosphate(out) + ATP + H2O = sn-glycerol 3-phosphate(in) + ADP + phosphate + H(+). Functionally, part of the ABC transporter complex UgpBAEC involved in sn-glycerol-3-phosphate (G3P) import. Responsible for energy coupling to the transport system. This Chromohalobacter salexigens (strain ATCC BAA-138 / DSM 3043 / CIP 106854 / NCIMB 13768 / 1H11) protein is sn-glycerol-3-phosphate import ATP-binding protein UgpC.